A 416-amino-acid chain; its full sequence is 4-hydroxy-3-methylbut-2-en-1-yl diphosphate synthase (flavodoxin) (416 aa).

Residues Cys304, Cys307, Cys350, and Glu357 each coordinate [4Fe-4S] cluster.

This sequence belongs to the IspG family. [4Fe-4S] cluster is required as a cofactor.

The catalysed reaction is (2E)-4-hydroxy-3-methylbut-2-enyl diphosphate + oxidized [flavodoxin] + H2O + 2 H(+) = 2-C-methyl-D-erythritol 2,4-cyclic diphosphate + reduced [flavodoxin]. It functions in the pathway isoprenoid biosynthesis; isopentenyl diphosphate biosynthesis via DXP pathway; isopentenyl diphosphate from 1-deoxy-D-xylulose 5-phosphate: step 5/6. In terms of biological role, converts 2C-methyl-D-erythritol 2,4-cyclodiphosphate (ME-2,4cPP) into 1-hydroxy-2-methyl-2-(E)-butenyl 4-diphosphate. This Rhizobium leguminosarum bv. trifolii (strain WSM2304) protein is 4-hydroxy-3-methylbut-2-en-1-yl diphosphate synthase (flavodoxin).